The sequence spans 530 residues: Autoinducer-2 kinase (530 aa).

It belongs to the FGGY kinase family.

The protein localises to the cytoplasm. It catalyses the reaction (S)-4,5-dihydroxypentane-2,3-dione + ATP = (2S)-2-hydroxy-3,4-dioxopentyl phosphate + ADP + H(+). Its function is as follows. Catalyzes the phosphorylation of autoinducer-2 (AI-2) to phospho-AI-2, which subsequently inactivates the transcriptional regulator LsrR and leads to the transcription of the lsr operon. Phosphorylates the ring-open form of (S)-4,5-dihydroxypentane-2,3-dione (DPD), which is the precursor to all AI-2 signaling molecules, at the C5 position. In Salmonella typhimurium (strain LT2 / SGSC1412 / ATCC 700720), this protein is Autoinducer-2 kinase.